The following is a 248-amino-acid chain: MTRIFFNQQYPTLVDISQRWQLEFDKEAEFELKFEQNQLSLHKRDEPKLDGIVVDFISGAVAHRRKFGGGRGQSIAKAVGLKQGVTPTVVDGTAGLGRDAFVLASLGCKVIMVERHPVVAALLEDGLRRAYDDAEIGAWMTERMSLFPGSSLEALAKITDAVDVVYLDPMYPHRDKSALVKKEMRVFQSLVGADLDADGLLTPAMTLATKRVVVKRPDYAEDLDGIKPSMVIATKKNRFDVYIKAAMK.

Residues 98 to 99, 114 to 115, 150 to 151, and D168 contribute to the S-adenosyl-L-methionine site; these read RD, ER, and SS.

This sequence belongs to the methyltransferase superfamily. RsmJ family.

The protein localises to the cytoplasm. The enzyme catalyses guanosine(1516) in 16S rRNA + S-adenosyl-L-methionine = N(2)-methylguanosine(1516) in 16S rRNA + S-adenosyl-L-homocysteine + H(+). In terms of biological role, specifically methylates the guanosine in position 1516 of 16S rRNA. The chain is Ribosomal RNA small subunit methyltransferase J from Shewanella denitrificans (strain OS217 / ATCC BAA-1090 / DSM 15013).